A 165-amino-acid polypeptide reads, in one-letter code: Protein SprT (165 aa).

Residues 10–158 (EACYRQAEHF…CRRCKATLVF (149 aa)) form the SprT-like domain. Residue H69 coordinates Zn(2+). E70 is a catalytic residue. Residue H73 coordinates Zn(2+).

Belongs to the SprT family. Zn(2+) serves as cofactor.

Its subcellular location is the cytoplasm. The polypeptide is Protein SprT (Pseudomonas aeruginosa (strain LESB58)).